The primary structure comprises 120 residues: Large ribosomal subunit protein bL20 (120 aa).

It belongs to the bacterial ribosomal protein bL20 family.

In terms of biological role, binds directly to 23S ribosomal RNA and is necessary for the in vitro assembly process of the 50S ribosomal subunit. It is not involved in the protein synthesizing functions of that subunit. The sequence is that of Large ribosomal subunit protein bL20 from Cereibacter sphaeroides (strain ATCC 17029 / ATH 2.4.9) (Rhodobacter sphaeroides).